A 605-amino-acid chain; its full sequence is Membrane protein insertase YidC (605 aa).

A helical membrane pass occupies residues 8-28 (MIIAIALSLAVLLGWNYFVAA). The span at 35–47 (RQQQAQTSASPSP) shows a compositional bias: low complexity. Positions 35 to 71 (RQQQAQTSASPSPKEGGPSAPVPGTLPGASGGNPQAA) are disordered. The next 4 helical transmembrane spans lie at 377-397 (LFGNFGVSILVVTLILKLFFL), 451-471 (WPVVIQIPVFFALYKVLFVTI), 496-516 (LFGLLPFAAPDLVHLGVWPIV), and 540-560 (FTFMPIIFTFMLGSFPAGLVI).

This sequence belongs to the OXA1/ALB3/YidC family. Type 1 subfamily. In terms of assembly, interacts with the Sec translocase complex via SecD. Specifically interacts with transmembrane segments of nascent integral membrane proteins during membrane integration.

Its subcellular location is the cell inner membrane. In terms of biological role, required for the insertion and/or proper folding and/or complex formation of integral membrane proteins into the membrane. Involved in integration of membrane proteins that insert both dependently and independently of the Sec translocase complex, as well as at least some lipoproteins. Aids folding of multispanning membrane proteins. The sequence is that of Membrane protein insertase YidC from Methylobacterium nodulans (strain LMG 21967 / CNCM I-2342 / ORS 2060).